Reading from the N-terminus, the 508-residue chain is Heat shock 70 kDa protein 14 (508 aa).

The protein belongs to the heat shock protein 70 family. In terms of assembly, component of ribosome-associated complex (RAC).

Its subcellular location is the cytoplasm. It localises to the cytosol. Its function is as follows. Component of the ribosome-associated complex (RAC), a complex involved in folding or maintaining nascent polypeptides in a folding-competent state. This Xenopus tropicalis (Western clawed frog) protein is Heat shock 70 kDa protein 14 (hspa14).